We begin with the raw amino-acid sequence, 145 residues long: MTKREYNSQPEMKEEVLAYLLQLSASLVLPVAIWLIAAGQIFTCLRGYTISNYQEKVEEKLCSTLVDKISEKLADLFPVYGITPSRNAPFPTILEQLLATVSQEERLAYLSNMYNSLIEMGIDSPCFYPIVQTFLFLMGGGGGPA.

Residues 16-36 (VLAYLLQLSASLVLPVAIWLI) traverse the membrane as a helical segment.

The protein localises to the mitochondrion membrane. This is an uncharacterized protein from Arabidopsis thaliana (Mouse-ear cress).